The chain runs to 122 residues: Large ribosomal subunit protein uL14 (122 aa).

It belongs to the universal ribosomal protein uL14 family. As to quaternary structure, part of the 50S ribosomal subunit. Forms a cluster with proteins L3 and L19. In the 70S ribosome, L14 and L19 interact and together make contacts with the 16S rRNA in bridges B5 and B8.

Functionally, binds to 23S rRNA. Forms part of two intersubunit bridges in the 70S ribosome. The sequence is that of Large ribosomal subunit protein uL14 from Cutibacterium acnes (strain DSM 16379 / KPA171202) (Propionibacterium acnes).